Here is a 288-residue protein sequence, read N- to C-terminus: Hyaluronidase (288 aa).

Asparagine 36 carries N-linked (GlcNAc...) asparagine glycosylation. Residue glutamate 66 is the Proton donor of the active site. A disulfide bridge links cysteine 142 with cysteine 154. The N-linked (GlcNAc...) asparagine glycan is linked to asparagine 282.

Belongs to the glycosyl hydrolase 56 family. As to expression, expressed by the venom gland.

Its subcellular location is the secreted. The catalysed reaction is Random hydrolysis of (1-&gt;4)-linkages between N-acetyl-beta-D-glucosamine and D-glucuronate residues in hyaluronate.. Its function is as follows. Hydrolyzes high molecular weight hyaluronic acid to produce small oligosaccharides. The sequence is that of Hyaluronidase from Polybia paulista (Neotropical social wasp).